We begin with the raw amino-acid sequence, 449 residues long: Monoacylglycerol lipase (449 aa).

A Glycyl lysine isopeptide (Lys-Gly) (interchain with G-Cter in ubiquitin) cross-link involves residue K82. In terms of domain architecture, AB hydrolase-1 spans P151–H392. Residues G230 to G234 carry the GXSXG motif. The active-site Nucleophile is S232. Residues D364 and H392 each act as charge relay system in the active site.

It belongs to the AB hydrolase superfamily. AB hydrolase 4 family.

It catalyses the reaction Hydrolyzes glycerol monoesters of long-chain fatty acids.. The enzyme catalyses 1-hexadecanoylglycerol + H2O = glycerol + hexadecanoate + H(+). The catalysed reaction is 1-octadecanoylglycerol + H2O = octadecanoate + glycerol + H(+). It carries out the reaction 1-(9Z-octadecenoyl)-glycerol + H2O = glycerol + (9Z)-octadecenoate + H(+). Functionally, converts monoacylglycerides (MAG) to free fatty acids and glycerol. Has a preference for palmitoyl-MAG. Does not play a significant role in ethyl ester biosynthesis. Also possesses ester hydrolase and low but persistent TAG lipase activity. The protein is Monoacylglycerol lipase of Saccharomyces cerevisiae (strain ATCC 204508 / S288c) (Baker's yeast).